Reading from the N-terminus, the 590-residue chain is Zinc finger protein 703 (590 aa).

A compositionally biased stretch (polar residues) spans 1–14 (MSDSPAGSNPRTPE). 3 disordered regions span residues 1 to 43 (MSDS…DPLR), 96 to 293 (CSQI…AGHV), and 341 to 366 (LVGGQLSGGLGLPPGKPPSSSPLTGA). Ser-2 bears the N-acetylserine mark. Composition is skewed to low complexity over residues 27–37 (PAVPAAVSLLP), 128–139 (RSAPGAASAAAA), 171–189 (GSSSVSSTSSSSSSSPGDK), and 207–219 (APVSASSSSSSPG). Basic and acidic residues predominate over residues 241-251 (ELDKKDQEPKP). Ser-252 carries the post-translational modification Phosphoserine. 2 stretches are compositionally biased toward gly residues: residues 260-273 (RGGGGEPGAHGGAE) and 341-352 (LVGGQLSGGLGL). A C2H2-type zinc finger spans residues 456–484 (HSCNWVAASGPCDKRFATSEELLSHLRTH). Arg-580 carries the omega-N-methylarginine modification.

It belongs to the Elbow/Noc family. As to quaternary structure, interacts with TLE4; increases transcriptional repression. Interacts with DCAF7 and PHB2. May interact with HSPD1. Expressed in mammary epithelium.

The protein localises to the nucleus. It is found in the cytoplasm. In terms of biological role, transcriptional corepressor which does not bind directly to DNA and may regulate transcription through recruitment of histone deacetylases to gene promoters. Regulates cell adhesion, migration and proliferation. May be required for segmental gene expression during hindbrain development. This is Zinc finger protein 703 (ZNF703) from Homo sapiens (Human).